The following is a 397-amino-acid chain: 2-aminoadipate transaminase (397 aa).

Glycine 40 is a binding site for substrate. Residues tyrosine 70, 100–101, asparagine 174, 202–205, 235–237, and arginine 245 contribute to the pyridoxal 5'-phosphate site; these read SQ, DDAY, and SFS. Asparagine 174 lines the substrate pocket. Lysine 263 is modified (N6-(pyridoxal phosphate)lysine). Arginine 368 is a binding site for substrate.

Belongs to the class-I pyridoxal-phosphate-dependent aminotransferase family. In terms of assembly, homodimer. It depends on pyridoxal 5'-phosphate as a cofactor.

It catalyses the reaction L-2-aminoadipate + 2-oxoglutarate = 2-oxoadipate + L-glutamate. The protein operates within amino-acid biosynthesis; L-lysine biosynthesis via AAA pathway; L-alpha-aminoadipate from 2-oxoglutarate: step 5/5. Its function is as follows. Catalyzes the transfer of an amino group between 2-oxoadipate (2-OA) and glutamate (Glu) to yield alpha-aminodipate (AAA). It can also transaminate glutamate, leucine, and aromatic amino acids. It also contributes in the biosynthesis of other amino acids such as leucine. The protein is 2-aminoadipate transaminase (lysN) of Thermus thermophilus (strain ATCC BAA-163 / DSM 7039 / HB27).